The following is a 965-amino-acid chain: Isoleucine--tRNA ligase (965 aa).

The 'HIGH' region signature appears at 68–78; that stretch reads PYANGSLHMGH. Position 582 (Glu-582) interacts with L-isoleucyl-5'-AMP. The short motif at 623–627 is the 'KMSKS' region element; sequence KMSKS. Residue Lys-626 participates in ATP binding. Zn(2+)-binding residues include Cys-936, Cys-939, Cys-956, and Cys-959.

This sequence belongs to the class-I aminoacyl-tRNA synthetase family. IleS type 1 subfamily. In terms of assembly, monomer. It depends on Zn(2+) as a cofactor.

The protein localises to the cytoplasm. It catalyses the reaction tRNA(Ile) + L-isoleucine + ATP = L-isoleucyl-tRNA(Ile) + AMP + diphosphate. Its function is as follows. Catalyzes the attachment of isoleucine to tRNA(Ile). As IleRS can inadvertently accommodate and process structurally similar amino acids such as valine, to avoid such errors it has two additional distinct tRNA(Ile)-dependent editing activities. One activity is designated as 'pretransfer' editing and involves the hydrolysis of activated Val-AMP. The other activity is designated 'posttransfer' editing and involves deacylation of mischarged Val-tRNA(Ile). The polypeptide is Isoleucine--tRNA ligase (Prochlorococcus marinus (strain MIT 9515)).